Reading from the N-terminus, the 146-residue chain is Transcription antitermination protein NusB (146 aa).

This sequence belongs to the NusB family.

Its function is as follows. Involved in transcription antitermination. Required for transcription of ribosomal RNA (rRNA) genes. Binds specifically to the boxA antiterminator sequence of the ribosomal RNA (rrn) operons. This is Transcription antitermination protein NusB from Koribacter versatilis (strain Ellin345).